The chain runs to 212 residues: MQNRPIIIGVTGGSGGGKTSVSRAILSHFPDEKISMIEHDSYYKDQSHLTFEERVKTNYDHPFAFDTDLMIEQIKELLAGRPVDIPTYDYTEHTRSSKTYRQEPQDVFIVEGILVLEDKRLRDLMDIKIFVDTDDXVRIXRXIKRXMEXXGRSLDSVINQYLGVVKPMYHQFIESTKRYADIVIPEGVSNTVAIDLLTTKIAKILEEARNSK.

Position 12–19 (12–19 (GGSGGGKT)) interacts with ATP.

This sequence belongs to the uridine kinase family.

It localises to the cytoplasm. The catalysed reaction is uridine + ATP = UMP + ADP + H(+). The enzyme catalyses cytidine + ATP = CMP + ADP + H(+). The protein operates within pyrimidine metabolism; CTP biosynthesis via salvage pathway; CTP from cytidine: step 1/3. Its pathway is pyrimidine metabolism; UMP biosynthesis via salvage pathway; UMP from uridine: step 1/1. The sequence is that of Uridine kinase from Streptococcus pneumoniae serotype 19F (strain G54).